We begin with the raw amino-acid sequence, 356 residues long: Homoserine O-succinyltransferase (356 aa).

Residue cysteine 146 is the Acyl-thioester intermediate of the active site. Substrate contacts are provided by lysine 167 and serine 196. The active-site Proton acceptor is the histidine 239. Glutamate 241 is an active-site residue. Residue arginine 253 participates in substrate binding.

The protein belongs to the MetA family.

The protein resides in the cytoplasm. It carries out the reaction L-homoserine + succinyl-CoA = O-succinyl-L-homoserine + CoA. The protein operates within amino-acid biosynthesis; L-methionine biosynthesis via de novo pathway; O-succinyl-L-homoserine from L-homoserine: step 1/1. Its function is as follows. Transfers a succinyl group from succinyl-CoA to L-homoserine, forming succinyl-L-homoserine. The polypeptide is Homoserine O-succinyltransferase (Thioalkalivibrio nitratireducens (strain DSM 14787 / UNIQEM 213 / ALEN2)).